Consider the following 504-residue polypeptide: Peroxisomal N(1)-acetyl-spermine/spermidine oxidase (504 aa).

FAD is bound by residues A16, E37, R45, and 61 to 62 (HW). H64 and V187 together coordinate substrate. V240 provides a ligand contact to FAD. N313 provides a ligand contact to substrate. FAD is bound by residues E465 and 474-475 (TT). The short motif at 502–504 (PRL) is the Microbody targeting signal element.

This sequence belongs to the flavin monoamine oxidase family. As to quaternary structure, monomer. FAD serves as cofactor. In terms of tissue distribution, widely expressed at different developmental stages. Expressed at high level in the liver and the stomach, expressed at lower level in heart, spleen, thymus, small intestine, muscle, pancreas, uterus, and breast and expressed at very low level in brain, kidney, lung, testis, skin, adrenal gland and prostate gland.

The protein localises to the peroxisome. Its subcellular location is the cytoplasm. The catalysed reaction is N(1)-acetylspermine + O2 + H2O = 3-acetamidopropanal + spermidine + H2O2. It carries out the reaction N(1)-acetylspermidine + O2 + H2O = 3-acetamidopropanal + putrescine + H2O2. The enzyme catalyses N(1),N(12)-diacetylspermine + O2 + H2O = 3-acetamidopropanal + N(1)-acetylspermidine + H2O2. It functions in the pathway amine and polyamine metabolism; spermine metabolism. Flavoenzyme which catalyzes the oxidation of N(1)-acetylspermine to spermidine and is thus involved in the polyamine back-conversion. Can also oxidize N(1)-acetylspermidine to putrescine. Substrate specificity: N(1)-acetylspermine = N(1)-acetylspermidine &gt; N(1),N(12)-diacylspermine &gt;&gt; spermine. Does not oxidize spermidine. Plays an important role in the regulation of polyamine intracellular concentration and has the potential to act as a determinant of cellular sensitivity to the antitumor polyamine analogs. In Mus musculus (Mouse), this protein is Peroxisomal N(1)-acetyl-spermine/spermidine oxidase (Paox).